The chain runs to 263 residues: Taurine import ATP-binding protein TauB (263 aa).

Residues 4 to 235 (LTAEAISLSF…RYAAGETVRS (232 aa)) enclose the ABC transporter domain. 40-47 (GPSGCGKS) provides a ligand contact to ATP.

Belongs to the ABC transporter superfamily. Taurine importer (TC 3.A.1.17.1) family. The complex is composed of two ATP-binding proteins (TauB), two transmembrane proteins (TauC) and a solute-binding protein (TauA).

The protein localises to the cell inner membrane. The enzyme catalyses taurine(out) + ATP + H2O = taurine(in) + ADP + phosphate + H(+). Part of the ABC transporter complex TauABC involved in taurine import. Responsible for energy coupling to the transport system. The chain is Taurine import ATP-binding protein TauB from Pseudomonas aeruginosa (strain ATCC 15692 / DSM 22644 / CIP 104116 / JCM 14847 / LMG 12228 / 1C / PRS 101 / PAO1).